Here is a 198-residue protein sequence, read N- to C-terminus: Recombination protein RecR (198 aa).

The C4-type zinc finger occupies 57 to 72 (CEKCNTFTEAQICEVC). The Toprim domain maps to 80–175 (TLLCVVETPA…AVTRLARGVP (96 aa)).

This sequence belongs to the RecR family.

Its function is as follows. May play a role in DNA repair. It seems to be involved in an RecBC-independent recombinational process of DNA repair. It may act with RecF and RecO. The chain is Recombination protein RecR from Burkholderia ambifaria (strain MC40-6).